A 396-amino-acid polypeptide reads, in one-letter code: Argininosuccinate synthase (396 aa).

Position 9–17 (alanine 9–serine 17) interacts with ATP. Residue tyrosine 85 coordinates L-citrulline. Glycine 115 lines the ATP pocket. 3 residues coordinate L-aspartate: threonine 117, asparagine 121, and aspartate 122. Asparagine 121 provides a ligand contact to L-citrulline. Arginine 125, serine 173, glutamate 258, and tyrosine 270 together coordinate L-citrulline.

It belongs to the argininosuccinate synthase family. Type 1 subfamily. In terms of assembly, homotetramer.

It localises to the cytoplasm. The catalysed reaction is L-citrulline + L-aspartate + ATP = 2-(N(omega)-L-arginino)succinate + AMP + diphosphate + H(+). Its pathway is amino-acid biosynthesis; L-arginine biosynthesis; L-arginine from L-ornithine and carbamoyl phosphate: step 2/3. The sequence is that of Argininosuccinate synthase from Streptococcus agalactiae serotype III (strain NEM316).